The sequence spans 314 residues: 4-hydroxy-3-methylbut-2-enyl diphosphate reductase (314 aa).

Position 12 (C12) interacts with [4Fe-4S] cluster. (2E)-4-hydroxy-3-methylbut-2-enyl diphosphate-binding residues include H41 and H74. Residues H41 and H74 each contribute to the dimethylallyl diphosphate site. The isopentenyl diphosphate site is built by H41 and H74. C96 provides a ligand contact to [4Fe-4S] cluster. H124 contacts (2E)-4-hydroxy-3-methylbut-2-enyl diphosphate. Dimethylallyl diphosphate is bound at residue H124. An isopentenyl diphosphate-binding site is contributed by H124. The active-site Proton donor is the E126. T167 lines the (2E)-4-hydroxy-3-methylbut-2-enyl diphosphate pocket. C197 is a binding site for [4Fe-4S] cluster. (2E)-4-hydroxy-3-methylbut-2-enyl diphosphate is bound by residues S225, S226, N227, and S269. 4 residues coordinate dimethylallyl diphosphate: S225, S226, N227, and S269. Isopentenyl diphosphate is bound by residues S225, S226, N227, and S269.

The protein belongs to the IspH family. [4Fe-4S] cluster is required as a cofactor.

It carries out the reaction isopentenyl diphosphate + 2 oxidized [2Fe-2S]-[ferredoxin] + H2O = (2E)-4-hydroxy-3-methylbut-2-enyl diphosphate + 2 reduced [2Fe-2S]-[ferredoxin] + 2 H(+). The enzyme catalyses dimethylallyl diphosphate + 2 oxidized [2Fe-2S]-[ferredoxin] + H2O = (2E)-4-hydroxy-3-methylbut-2-enyl diphosphate + 2 reduced [2Fe-2S]-[ferredoxin] + 2 H(+). It functions in the pathway isoprenoid biosynthesis; dimethylallyl diphosphate biosynthesis; dimethylallyl diphosphate from (2E)-4-hydroxy-3-methylbutenyl diphosphate: step 1/1. It participates in isoprenoid biosynthesis; isopentenyl diphosphate biosynthesis via DXP pathway; isopentenyl diphosphate from 1-deoxy-D-xylulose 5-phosphate: step 6/6. Functionally, catalyzes the conversion of 1-hydroxy-2-methyl-2-(E)-butenyl 4-diphosphate (HMBPP) into a mixture of isopentenyl diphosphate (IPP) and dimethylallyl diphosphate (DMAPP). Acts in the terminal step of the DOXP/MEP pathway for isoprenoid precursor biosynthesis. The polypeptide is 4-hydroxy-3-methylbut-2-enyl diphosphate reductase (Actinobacillus pleuropneumoniae serotype 5b (strain L20)).